The chain runs to 499 residues: Apolipoprotein N-acyltransferase (499 aa).

Helical transmembrane passes span 17-37, 38-58, 84-104, 131-151, 163-183, and 198-218; these read VLAGIGIAHGGLLWMAPALAL, LWSACRFPVAASLWGFVAVLL, ASIWLFCGAAAAVLVGLWAWL, IWGLAEVLLAGSPLFWIGVGG, LARWFGAGGLATLQLLIGWWL, and RSLLVGLLCLLLAHGFGWSLL. One can recognise a CN hydrolase domain in the interval 232–458; the sequence is WQPAIPTRSK…EGVGLADLHF (227 aa). Glutamate 273 functions as the Proton acceptor in the catalytic mechanism. The active site involves lysine 322. Catalysis depends on cysteine 370, which acts as the Nucleophile. A helical membrane pass occupies residues 474-494; it reads IGLMLFAVVGLGLSRVRSWLI.

This sequence belongs to the CN hydrolase family. Apolipoprotein N-acyltransferase subfamily.

Its subcellular location is the cell inner membrane. It catalyses the reaction N-terminal S-1,2-diacyl-sn-glyceryl-L-cysteinyl-[lipoprotein] + a glycerophospholipid = N-acyl-S-1,2-diacyl-sn-glyceryl-L-cysteinyl-[lipoprotein] + a 2-acyl-sn-glycero-3-phospholipid + H(+). It participates in protein modification; lipoprotein biosynthesis (N-acyl transfer). Catalyzes the phospholipid dependent N-acylation of the N-terminal cysteine of apolipoprotein, the last step in lipoprotein maturation. In Prochlorococcus marinus (strain MIT 9313), this protein is Apolipoprotein N-acyltransferase.